The chain runs to 449 residues: PC-esterase domain-containing protein 1A (449 aa).

The protein belongs to the PC-esterase family.

The polypeptide is PC-esterase domain-containing protein 1A (Pced1a) (Mus musculus (Mouse)).